The chain runs to 577 residues: E3 ubiquitin-protein ligase MSL2 (577 aa).

The segment at 1–116 (MNPVNATALY…CEYITQTTLA (116 aa)) is sufficient for interaction with MSL1. 8 residues coordinate Zn(2+): cysteine 44, cysteine 47, cysteine 62, histidine 64, cysteine 67, cysteine 70, cysteine 81, and cysteine 84. The RING-type zinc finger occupies 44–85 (CCVCGHLLQDPIAPTNSTCQHYVCKTCKGKKMMMKPSCSWCK). Lysine 375 is covalently cross-linked (Glycyl lysine isopeptide (Lys-Gly) (interchain with G-Cter in SUMO2)). Residues 405-428 (TKSMKKSHEHGSKKSHSKSKPGIL) form a disordered region. Positions 407–423 (SMKKSHEHGSKKSHSKS) are enriched in basic residues. The residue at position 447 (serine 447) is a Phosphoserine. Residues 457–508 (QEKKGCKCGRATQNPSVLTCRGQRCPCYSNRKACLDCICRGCQNSYMANGEK) enclose the CXC MSL2-type domain. Cysteine 462, cysteine 464, cysteine 476, cysteine 481, cysteine 483, cysteine 490, cysteine 493, cysteine 495, and cysteine 498 together coordinate Zn(2+).

It belongs to the MSL2 family. In terms of assembly, component of a multisubunit histone acetyltransferase complex (MSL) at least composed of the KAT8/MOF/MYST1, MSL1/hampin, MSL2 and MSL3. Forms a MSL heterotetrameric core with MSL1.

It localises to the nucleus. The protein resides in the chromosome. The catalysed reaction is S-ubiquitinyl-[E2 ubiquitin-conjugating enzyme]-L-cysteine + [acceptor protein]-L-lysine = [E2 ubiquitin-conjugating enzyme]-L-cysteine + N(6)-ubiquitinyl-[acceptor protein]-L-lysine.. Its pathway is protein modification; protein ubiquitination. Functionally, non-catalytic component of the MSL histone acetyltransferase complex, a multiprotein complex that mediates the majority of histone H4 acetylation at 'Lys-16' (H4K16ac), an epigenetic mark that prevents chromatin compaction. The MSL complex is required for chromosome stability and genome integrity by maintaining homeostatic levels of H4K16ac. The MSL complex is also involved in gene dosage by promoting up-regulation of genes expressed by the X chromosome. X up-regulation is required to compensate for autosomal biallelic expression. The MSL complex also participates in gene dosage compensation by promoting expression of Tsix non-coding RNA. MSL2 plays a key role in gene dosage by ensuring biallelic expression of a subset of dosage-sensitive genes, including many haploinsufficient genes. Acts by promoting promoter-enhancer contacts, thereby preventing DNA methylation of one allele and creating a methylation-free environment for methylation-sensitive transcription factors such as SP1, KANSL1 and KANSL3. Also acts as an E3 ubiquitin ligase that promotes monoubiquitination of histone H2B at 'Lys-35' (H2BK34Ub), but not that of H2A. This activity is greatly enhanced by heterodimerization with MSL1. H2B ubiquitination in turn stimulates histone H3 methylation at 'Lys-4' (H3K4me) and 'Lys-79' (H3K79me) and leads to gene activation, including that of HOXA9 and MEIS1. The chain is E3 ubiquitin-protein ligase MSL2 from Mus musculus (Mouse).